We begin with the raw amino-acid sequence, 262 residues long: Catechol O-methyltransferase domain-containing protein 1 (262 aa).

The helical; Signal-anchor for type II membrane protein transmembrane segment at 12–32 (AALALGSAALGAAFATGLLLG) threads the bilayer. S-adenosyl-L-methionine is bound by residues Asp-108, 110 to 111 (GT), Ser-116, Glu-134, Val-135, Ala-163, Asp-185, Asp-187, and Tyr-194.

It belongs to the class I-like SAM-binding methyltransferase superfamily. Cation-dependent O-methyltransferase family. In terms of assembly, homodimer.

It is found in the membrane. Functionally, putative O-methyltransferase. The chain is Catechol O-methyltransferase domain-containing protein 1 (Comtd1) from Mus musculus (Mouse).